The following is a 1463-amino-acid chain: Regulating synaptic membrane exocytosis protein 1 (1463 aa).

The interval 1–26 (MSSAVGPRGPRPPTVPPPMQELPDLS) is disordered. A compositionally biased stretch (pro residues) spans 9–20 (GPRPPTVPPPMQ). The region spanning 22-205 (LPDLSHLTEE…TKSGAWFFGS (184 aa)) is the RabBD domain. The segment at 133–193 (KDDAPTCGIC…VCNLCRKQQE (61 aa)) adopts an FYVE-type zinc-finger fold. The Zn(2+) site is built by cysteine 139, cysteine 142, cysteine 155, cysteine 158, cysteine 163, cysteine 166, cysteine 185, and cysteine 188. A disordered region spans residues 205-393 (SGPQQPSQDG…DVELESESVS (189 aa)). Residues 206–222 (GPQQPSQDGTLSDTATG) show a composition bias toward polar residues. Positions 227–240 (VPREKKARLQERSR) are enriched in basic and acidic residues. Residues 241–256 (SQTPLSTAAVSSQDTA) show a composition bias toward polar residues. Residues 327-372 (ADERERKERRETRRLEKGRSQDYPDRLEKREDGRVAEDEKQRKEEE) are compositionally biased toward basic and acidic residues. A compositionally biased stretch (acidic residues) spans 381 to 391 (SCEDVELESES). A Phosphoserine modification is found at serine 413. The PDZ domain occupies 440 to 526 (RTTMPKESGA…EPQVEIIVSR (87 aa)). The tract at residues 533–567 (RIPESSHPPLESSSSSFESQKMERPSISVISPTSP) is disordered. A compositionally biased stretch (low complexity) spans 535–551 (PESSHPPLESSSSSFES). Serine 563 and serine 566 each carry phosphoserine. In terms of domain architecture, C2 1 spans 577-700 (LPGQLSVKLW…ALLDDEPHWY (124 aa)). The disordered stretch occupies residues 705 to 856 (HDESSLPLPQ…YSSEPDSELL (152 aa)). Serine 716 is modified (phosphoserine). The span at 770-779 (ATTLTVPEQQ) shows a compositional bias: polar residues. Serine 812 carries the post-translational modification Phosphoserine. Positions 827–844 (RHHDASRSLADHRSRHAE) are enriched in basic and acidic residues. Serine 866 bears the Phosphoserine mark. The segment at 874–1049 (SELQPSLDRA…RQLPQVPVRS (176 aa)) is disordered. The span at 928–941 (PENDRHSRKSERSS) shows a compositional bias: basic and acidic residues. The segment covering 1021-1035 (QGSPTQSPPADTSFG) has biased composition (polar residues). Residue serine 1023 is modified to Phosphoserine. Threonine 1025 carries the phosphothreonine modification. 7 positions are modified to phosphoserine: serine 1027, serine 1079, serine 1081, serine 1082, serine 1110, serine 1111, and serine 1113. The interval 1104–1161 (DNASAKSSDSDVSDVSAISRASSTSRLSSTSFMSEQSERPRGRISSFTPKMQGRRMGT) is disordered. A compositionally biased stretch (low complexity) spans 1116-1137 (SDVSAISRASSTSRLSSTSFMS). Serine 1187 bears the Phosphoserine mark. Residues 1216 to 1266 (RSRSTSQLSQTESGHKKLKSTIQRSTETGMAAEMRKMVRQPSRESTDGSIN) form a disordered region. Over residues 1248 to 1261 (EMRKMVRQPSREST) the composition is skewed to basic and acidic residues. Residues 1309–1427 (AMGDIQIGME…DLSSMVIGWY (119 aa)) enclose the C2 2 domain. Serine 1448, serine 1451, serine 1454, and serine 1463 each carry phosphoserine.

As to quaternary structure, binds SNAP25, SYT1 and CACNA1B. Interaction with SYT1 is enhanced by calcium ions. Interaction with SNAP25 is weaker in the presence of calcium ions. Interacts with TSPOAP1 and RIMBP2; interacts with PPFIA3 and PPFIA4. Interacts with ERC1. Interacts with RAB3A, RAB3B and RAB3D that have been activated by GTP-binding. Interacts with RAB3C, RAB10, RAB26 and RAB37. Binds UNC13A. In terms of processing, phosphorylated by BRSK1.

The protein localises to the cell membrane. It localises to the synapse. It is found in the presynaptic cell membrane. In terms of biological role, rab effector involved in exocytosis. May act as scaffold protein that regulates neurotransmitter release at the active zone. Essential for maintaining normal probability of neurotransmitter release and for regulating release during short-term synaptic plasticity. Plays a role in dendrite formation by melanocytes. This chain is Regulating synaptic membrane exocytosis protein 1 (Rims1), found in Mus musculus (Mouse).